Consider the following 251-residue polypeptide: Coproheme decarboxylase (251 aa).

Fe-coproporphyrin III is bound by residues Arg-133, 147 to 151 (YPMSK), His-174, Gln-187, and Ser-225. Residue Tyr-147 is part of the active site.

The protein belongs to the ChdC family. Type 1 subfamily. Requires Fe-coproporphyrin III as cofactor.

It catalyses the reaction Fe-coproporphyrin III + 2 H2O2 + 2 H(+) = heme b + 2 CO2 + 4 H2O. The catalysed reaction is Fe-coproporphyrin III + H2O2 + H(+) = harderoheme III + CO2 + 2 H2O. It carries out the reaction harderoheme III + H2O2 + H(+) = heme b + CO2 + 2 H2O. It functions in the pathway porphyrin-containing compound metabolism; protoheme biosynthesis. Its function is as follows. Involved in coproporphyrin-dependent heme b biosynthesis. Catalyzes the decarboxylation of Fe-coproporphyrin III (coproheme) to heme b (protoheme IX), the last step of the pathway. The reaction occurs in a stepwise manner with a three-propionate intermediate. The chain is Coproheme decarboxylase from Listeria monocytogenes serotype 4a (strain HCC23).